A 305-amino-acid polypeptide reads, in one-letter code: Probable 4-deoxy-4-formamido-L-arabinose-phosphoundecaprenol deformylase ArnD (305 aa).

The region spanning threonine 7 to valine 262 is the NodB homology domain.

It belongs to the polysaccharide deacetylase family. ArnD deformylase subfamily.

The enzyme catalyses 4-deoxy-4-formamido-alpha-L-arabinopyranosyl di-trans,octa-cis-undecaprenyl phosphate + H2O = 4-amino-4-deoxy-alpha-L-arabinopyranosyl di-trans,octa-cis-undecaprenyl phosphate + formate. Its pathway is glycolipid biosynthesis; 4-amino-4-deoxy-alpha-L-arabinose undecaprenyl phosphate biosynthesis; 4-amino-4-deoxy-alpha-L-arabinose undecaprenyl phosphate from UDP-4-deoxy-4-formamido-beta-L-arabinose and undecaprenyl phosphate: step 2/2. The protein operates within bacterial outer membrane biogenesis; lipopolysaccharide biosynthesis. In terms of biological role, catalyzes the deformylation of 4-deoxy-4-formamido-L-arabinose-phosphoundecaprenol to 4-amino-4-deoxy-L-arabinose-phosphoundecaprenol. The modified arabinose is attached to lipid A and is required for resistance to polymyxin and cationic antimicrobial peptides. In Shewanella sediminis (strain HAW-EB3), this protein is Probable 4-deoxy-4-formamido-L-arabinose-phosphoundecaprenol deformylase ArnD.